The chain runs to 121 residues: Prismalin-14 (121 aa).

The first 16 residues, 1–16 (MRSLLVLLALAACASA), serve as a signal peptide directing secretion. The residue at position 17 (Gln17) is a Pyrrolidone carboxylic acid. 4 tandem repeats follow at residues 48–51 (PIYR), 52–55 (PIYR), 56–59 (PIYY), and 60–63 (PQII). The tract at residues 48 to 63 (PIYRPIYRPIYYPQII) is 4 X 4 AA approximate tandem repeats of P-I-Y-R.

In terms of tissue distribution, expressed only at the mantle edge where it is found predominantly in the inner side of the outer mantle fold.

In terms of biological role, displays inhibitory activity against calcium carbonate precipitation, binds calcium and affects crystallization of calcium carbonate in vitro. May be involved in calcification of the prismatic layer of the shell. In Pinctada fucata (Akoya pearl oyster), this protein is Prismalin-14.